The primary structure comprises 225 residues: MMLKKAQTTDNLKLPISLNATGWLESSPDWSNISGLVAGVDEVGRGALFGPVVAASVILPASSFPQLMTAEIKDSKKLSHSRRVQLAQQISTLAIDWRIGYATTAEIDRINILQATLLAMRRSVKKLKLQPILCLVDGNQPVQDLPILQQTIVKGDERSLNIAAASIMAKVWRDDLIQRLSTKYPMYDLKSNKGYGSKKHLLALEKHGASPLHRQSFRPCQISLD.

Residues 35–225 (GLVAGVDEVG…SFRPCQISLD (191 aa)) enclose the RNase H type-2 domain. Residues D41, E42, and D137 each contribute to the a divalent metal cation site.

Belongs to the RNase HII family. Requires Mn(2+) as cofactor. The cofactor is Mg(2+).

The protein resides in the cytoplasm. The catalysed reaction is Endonucleolytic cleavage to 5'-phosphomonoester.. Functionally, endonuclease that specifically degrades the RNA of RNA-DNA hybrids. This Trichormus variabilis (strain ATCC 29413 / PCC 7937) (Anabaena variabilis) protein is Ribonuclease HII.